A 1062-amino-acid chain; its full sequence is Inactive tyrosine-protein kinase 7 (1062 aa).

An N-terminal signal peptide occupies residues methionine 1 to alanine 22. 7 Ig-like C2-type domains span residues alanine 23 to asparagine 112, proline 120 to serine 210, alanine 217 to leucine 309, proline 301 to threonine 399, proline 404 to glutamine 489, lysine 495 to leucine 578, and glycine 570 to leucine 672. The Extracellular segment spans residues alanine 23 to threonine 696. A disulfide bridge links cysteine 45 with cysteine 93. N-linked (GlcNAc...) asparagine glycans are attached at residues asparagine 98, asparagine 108, asparagine 176, asparagine 206, asparagine 260, and asparagine 275. Cysteine 142 and cysteine 192 are joined by a disulfide. Disulfide bonds link cysteine 238-cysteine 293 and cysteine 335-cysteine 383. Residues asparagine 397, asparagine 455, asparagine 559, and asparagine 638 are each glycosylated (N-linked (GlcNAc...) asparagine). Disulfide bonds link cysteine 425-cysteine 473, cysteine 516-cysteine 562, and cysteine 605-cysteine 656. A helical transmembrane segment spans residues isoleucine 697–tyrosine 717. The Cytoplasmic portion of the chain corresponds to cysteine 718–glutamine 1062. Disordered stretches follow at residues glutamine 728–glutamine 750 and asparagine 1039–glutamine 1062. Positions alanine 786–glutamine 1062 are interaction with CTNNB1. The 271-residue stretch at leucine 788–alanine 1058 folds into the Protein kinase; inactive domain. At serine 1056 the chain carries Phosphoserine.

It belongs to the protein kinase superfamily. Tyr protein kinase family. Insulin receptor subfamily. Interacts with CTNNB1. MMP14 cleaves PTK7 between Pro-613 and Leu-614 generating an N-terminal soluble (70 kDa) fragment and a membrane C-terminal (50 kDa) fragment. Proteolysis by MMP14 regulates PTK7 function in non-canonical Wnt signaling pathway. In terms of tissue distribution, expressed at high levels in lung and un-pregnant uterus among adult tissues, and in the tail, limbs, somites, gut and craniofacial regions among embryonic tissues.

It localises to the membrane. Its subcellular location is the cell junction. Its function is as follows. Inactive tyrosine kinase involved in Wnt signaling pathway. Component of both the non-canonical (also known as the Wnt/planar cell polarity signaling) and the canonical Wnt signaling pathway. Functions in cell adhesion, cell migration, cell polarity, proliferation, actin cytoskeleton reorganization and apoptosis. Has a role in embryogenesis, epithelial tissue organization and angiogenesis. This is Inactive tyrosine-protein kinase 7 (Ptk7) from Mus musculus (Mouse).